The following is a 744-amino-acid chain: Protein pthb1 homolog (744 aa).

Over residues 722–733 (EHSPKELPKIRE) the composition is skewed to basic and acidic residues. Residues 722 to 744 (EHSPKELPKIREEEEEEEQQVTA) form a disordered region. Positions 734 to 744 (EEEEEEQQVTA) are enriched in acidic residues.

In terms of assembly, part of BBSome complex, that contains bbs-1, bbs-2, bbs-4, bbs-5, osm-12, bbs-8/ttc-8 and bbs-9. Interacts with bbs-1.

Its function is as follows. Component of the BBSome complex. The BBSome complex is thought to function as a coat complex required for sorting of specific membrane proteins to the primary cilia. The BBSome complex is required for ciliogenesis but is dispensable for centriolar satellite function. Required for proper BBSome complex assembly and its ciliary localization. Required for cilia biogenesis and both the assembly and movement of intraflagellar transport proteins along the ciliary axoneme. In ciliated sensory neurons, required for the sensation of nitric oxide and avoidance of NO-producing organisms like P.aeruginosa. The protein is Protein pthb1 homolog of Caenorhabditis elegans.